The following is a 215-amino-acid chain: Small ribosomal subunit protein uS7 (215 aa).

This sequence belongs to the universal ribosomal protein uS7 family. In terms of assembly, part of the 30S ribosomal subunit.

One of the primary rRNA binding proteins, it binds directly to 16S rRNA where it nucleates assembly of the head domain of the 30S subunit. Is located at the subunit interface close to the decoding center. This Thermococcus gammatolerans (strain DSM 15229 / JCM 11827 / EJ3) protein is Small ribosomal subunit protein uS7.